Reading from the N-terminus, the 397-residue chain is Arginine biosynthesis bifunctional protein ArgJ (397 aa).

Substrate-binding residues include Thr-147, Lys-173, Thr-184, Glu-270, Asn-392, and Thr-397. The active-site Nucleophile is the Thr-184.

It belongs to the ArgJ family. Heterotetramer of two alpha and two beta chains.

It localises to the cytoplasm. The enzyme catalyses N(2)-acetyl-L-ornithine + L-glutamate = N-acetyl-L-glutamate + L-ornithine. It carries out the reaction L-glutamate + acetyl-CoA = N-acetyl-L-glutamate + CoA + H(+). It functions in the pathway amino-acid biosynthesis; L-arginine biosynthesis; L-ornithine and N-acetyl-L-glutamate from L-glutamate and N(2)-acetyl-L-ornithine (cyclic): step 1/1. The protein operates within amino-acid biosynthesis; L-arginine biosynthesis; N(2)-acetyl-L-ornithine from L-glutamate: step 1/4. In terms of biological role, catalyzes two activities which are involved in the cyclic version of arginine biosynthesis: the synthesis of N-acetylglutamate from glutamate and acetyl-CoA as the acetyl donor, and of ornithine by transacetylation between N(2)-acetylornithine and glutamate. This is Arginine biosynthesis bifunctional protein ArgJ from Streptococcus thermophilus (strain CNRZ 1066).